The primary structure comprises 487 residues: N-succinylglutamate 5-semialdehyde dehydrogenase (487 aa).

221-226 lines the NAD(+) pocket; it reads GSSDTG. Catalysis depends on residues E244 and C278.

The protein belongs to the aldehyde dehydrogenase family. AstD subfamily.

It catalyses the reaction N-succinyl-L-glutamate 5-semialdehyde + NAD(+) + H2O = N-succinyl-L-glutamate + NADH + 2 H(+). Its pathway is amino-acid degradation; L-arginine degradation via AST pathway; L-glutamate and succinate from L-arginine: step 4/5. In terms of biological role, catalyzes the NAD-dependent reduction of succinylglutamate semialdehyde into succinylglutamate. This chain is N-succinylglutamate 5-semialdehyde dehydrogenase, found in Paraburkholderia xenovorans (strain LB400).